Here is a 261-residue protein sequence, read N- to C-terminus: 5'-nucleotidase SurE (261 aa).

A divalent metal cation-binding residues include aspartate 8, aspartate 9, serine 39, and asparagine 94.

It belongs to the SurE nucleotidase family. A divalent metal cation serves as cofactor.

It localises to the cytoplasm. It carries out the reaction a ribonucleoside 5'-phosphate + H2O = a ribonucleoside + phosphate. In terms of biological role, nucleotidase that shows phosphatase activity on nucleoside 5'-monophosphates. This chain is 5'-nucleotidase SurE, found in Archaeoglobus fulgidus (strain ATCC 49558 / DSM 4304 / JCM 9628 / NBRC 100126 / VC-16).